We begin with the raw amino-acid sequence, 305 residues long: Probable cell division protein WhiA (305 aa).

The segment at residues 269 to 302 is a DNA-binding region (H-T-H motif); it reads TIKELGELLDPPLGKSGVNHRLRKLVERSNDLKK.

This sequence belongs to the WhiA family.

In terms of biological role, involved in cell division and chromosome segregation. In Lactococcus lactis subsp. cremoris (strain MG1363), this protein is Probable cell division protein WhiA.